We begin with the raw amino-acid sequence, 334 residues long: Glycerol-3-phosphate dehydrogenase [NAD(P)+] (334 aa).

Residues Trp-13, Arg-33, and Lys-106 each contribute to the NADPH site. The sn-glycerol 3-phosphate site is built by Lys-106, Gly-137, and Ser-139. An NADPH-binding site is contributed by Ala-141. 5 residues coordinate sn-glycerol 3-phosphate: Lys-192, Asp-245, Ser-255, Arg-256, and Asn-257. The active-site Proton acceptor is the Lys-192. Arg-256 serves as a coordination point for NADPH. NADPH contacts are provided by Val-280 and Glu-282.

The protein belongs to the NAD-dependent glycerol-3-phosphate dehydrogenase family.

Its subcellular location is the cytoplasm. The enzyme catalyses sn-glycerol 3-phosphate + NAD(+) = dihydroxyacetone phosphate + NADH + H(+). The catalysed reaction is sn-glycerol 3-phosphate + NADP(+) = dihydroxyacetone phosphate + NADPH + H(+). The protein operates within membrane lipid metabolism; glycerophospholipid metabolism. Functionally, catalyzes the reduction of the glycolytic intermediate dihydroxyacetone phosphate (DHAP) to sn-glycerol 3-phosphate (G3P), the key precursor for phospholipid synthesis. The polypeptide is Glycerol-3-phosphate dehydrogenase [NAD(P)+] (Chlamydia trachomatis serovar A (strain ATCC VR-571B / DSM 19440 / HAR-13)).